Reading from the N-terminus, the 239-residue chain is Ribosomal RNA small subunit methyltransferase G (239 aa).

Residues Gly78, Phe83, 129–130, and Arg148 contribute to the S-adenosyl-L-methionine site; that span reads AE.

Belongs to the methyltransferase superfamily. RNA methyltransferase RsmG family.

The protein resides in the cytoplasm. In terms of biological role, specifically methylates the N7 position of a guanine in 16S rRNA. The polypeptide is Ribosomal RNA small subunit methyltransferase G (Alkaliphilus oremlandii (strain OhILAs) (Clostridium oremlandii (strain OhILAs))).